A 339-amino-acid polypeptide reads, in one-letter code: Nicotinate-nucleotide--dimethylbenzimidazole phosphoribosyltransferase (339 aa).

The Proton acceptor role is filled by E306.

The protein belongs to the CobT family.

It catalyses the reaction 5,6-dimethylbenzimidazole + nicotinate beta-D-ribonucleotide = alpha-ribazole 5'-phosphate + nicotinate + H(+). The protein operates within nucleoside biosynthesis; alpha-ribazole biosynthesis; alpha-ribazole from 5,6-dimethylbenzimidazole: step 1/2. Functionally, catalyzes the synthesis of alpha-ribazole-5'-phosphate from nicotinate mononucleotide (NAMN) and 5,6-dimethylbenzimidazole (DMB). The protein is Nicotinate-nucleotide--dimethylbenzimidazole phosphoribosyltransferase of Brucella melitensis biotype 1 (strain ATCC 23456 / CCUG 17765 / NCTC 10094 / 16M).